Here is a 260-residue protein sequence, read N- to C-terminus: Proliferating cell nuclear antigen (260 aa).

The DNA-binding element occupies 61 to 80 (RCDRNLSMGMNLGSMAKILK).

The protein belongs to the PCNA family. In terms of assembly, homotrimer. Forms a complex with activator 1 heteropentamer in the presence of ATP. Interacts with E2f. Interacts with the catalytic subunits of two DNA polymerase complexes: PolD1 from the delta complex and PolE1/DNApol-epsilon255 from the epsilon complex. In terms of tissue distribution, expressed at high levels in adult ovary.

Its subcellular location is the nucleus. The protein resides in the chromosome. The protein localises to the cytoplasm. Its function is as follows. Likely to be an auxiliary protein of DNA polymerase delta complex and is probably involved in the control of DNA replication and repair by increasing the polymerase's processibility. The sequence is that of Proliferating cell nuclear antigen from Drosophila melanogaster (Fruit fly).